The chain runs to 201 residues: dTTP/UTP pyrophosphatase (201 aa).

D73 acts as the Proton acceptor in catalysis.

Belongs to the Maf family. YhdE subfamily. The cofactor is a divalent metal cation.

Its subcellular location is the cytoplasm. It carries out the reaction dTTP + H2O = dTMP + diphosphate + H(+). The catalysed reaction is UTP + H2O = UMP + diphosphate + H(+). Nucleoside triphosphate pyrophosphatase that hydrolyzes dTTP and UTP. May have a dual role in cell division arrest and in preventing the incorporation of modified nucleotides into cellular nucleic acids. This is dTTP/UTP pyrophosphatase from Pseudomonas aeruginosa (strain ATCC 15692 / DSM 22644 / CIP 104116 / JCM 14847 / LMG 12228 / 1C / PRS 101 / PAO1).